The primary structure comprises 639 residues: Coiled-coil domain-containing protein 27 (639 aa).

Residues 154-176 form a disordered region; it reads YPRKRSEPSDPSPTGSPTVVKKS. Residues 203–242 adopt a coiled-coil conformation; it reads QRFSEMESQMQKKDQEILTLQKEKEALKKQLKNLLRGKGT. The tract at residues 291 to 385 is disordered; it reads ESSKELHVEP…EECHPKRSYS (95 aa). The span at 292-309 shows a compositional bias: basic and acidic residues; that stretch reads SSKELHVEPGSAIEEKSS. Over residues 310 to 320 the composition is skewed to low complexity; sequence EGPPEEAAAAK. 2 stretches are compositionally biased toward acidic residues: residues 336-350 and 358-369; these read GPEE…EVEG and EGEILVNEEEAS. A compositionally biased stretch (basic and acidic residues) spans 370 to 380; that stretch reads WELREDEECHP.

The protein is Coiled-coil domain-containing protein 27 (Ccdc27) of Mus musculus (Mouse).